The chain runs to 313 residues: Protein TIFY 4A (313 aa).

The tract at residues serine 118–glutamate 149 is disordered. Residues threonine 150–asparagine 185 enclose the Tify domain. 2 disordered regions span residues lysine 220–lysine 256 and glutamine 281–isoleucine 313. The short motif at glutamine 232–alanine 254 is the Jas element. The short motif at asparagine 234 to arginine 241 is the Nuclear localization signal element. Over residues arginine 243 to lysine 256 the composition is skewed to basic residues.

Belongs to the TIFY/JAZ family. In terms of assembly, interacts with AFPH2/NINJA.

The protein resides in the nucleus. Regulates the arrest of dispersed meristematic cells during lamina development. This chain is Protein TIFY 4A (TIFY4A), found in Arabidopsis thaliana (Mouse-ear cress).